The chain runs to 241 residues: Phosphoadenosine 5'-phosphosulfate reductase (241 aa).

Cys-235 (nucleophile; cysteine thiosulfonate intermediate) is an active-site residue.

This sequence belongs to the PAPS reductase family. CysH subfamily.

The protein localises to the cytoplasm. The catalysed reaction is [thioredoxin]-disulfide + sulfite + adenosine 3',5'-bisphosphate + 2 H(+) = [thioredoxin]-dithiol + 3'-phosphoadenylyl sulfate. It participates in sulfur metabolism; hydrogen sulfide biosynthesis; sulfite from sulfate: step 3/3. Its function is as follows. Catalyzes the formation of sulfite from phosphoadenosine 5'-phosphosulfate (PAPS) using thioredoxin as an electron donor. This chain is Phosphoadenosine 5'-phosphosulfate reductase, found in Xanthomonas oryzae pv. oryzae (strain MAFF 311018).